We begin with the raw amino-acid sequence, 766 residues long: Dipeptidyl peptidase 4 (766 aa).

The Cytoplasmic portion of the chain corresponds to 1 to 6; sequence MKTPWK. Residues 7–28 form a helical; Signal-anchor for type II membrane protein membrane-spanning segment; that stretch reads VLLGLLGAAALVTIITVPVVLL. Topologically, residues 29–766 are extracellular; that stretch reads NKGTDDATAD…HFIKQCFSLP (738 aa). 7 N-linked (GlcNAc...) asparagine glycosylation sites follow: N85, N92, N150, N219, N229, N281, and N321. Intrachain disulfides connect C328–C339, C385–C394, C444–C447, and C454–C472. N-linked (GlcNAc...) asparagine glycosylation occurs at N520. Residue S630 is the Charge relay system of the active site. A disulfide bond links C649 and C762. N685 carries an N-linked (GlcNAc...) asparagine glycan. Active-site charge relay system residues include D708 and H740.

This sequence belongs to the peptidase S9B family. DPPIV subfamily. Monomer. Homodimer. Heterodimer with Seprase (FAP). Requires homodimerization for optimal dipeptidyl peptidase activity and T-cell costimulation. Found in a membrane raft complex, at least composed of BCL10, CARD11, DPP4 and IKBKB. Associates with collagen. Interacts with PTPRC; the interaction is enhanced in an interleukin-12-dependent manner in activated lymphocytes. Interacts (via extracellular domain) with ADA; does not inhibit its dipeptidyl peptidase activity. Interacts with CAV1 (via the N-terminus); the interaction is direct. Interacts (via cytoplasmic tail) with CARD11 (via PDZ domain); its homodimerization is necessary for interaction with CARD11. Interacts with IGF2R; the interaction is direct. Interacts with GPC3. Interacts with human coronavirus-EMC spike protein and acts as a receptor for this virus. As to quaternary structure, (Microbial infection) Interacts with MERS coronavirus/MERS-CoV spike protein. The soluble form (Dipeptidyl peptidase 4 soluble form also named SDPP) derives from the membrane form (Dipeptidyl peptidase 4 membrane form also named MDPP) by proteolytic processing. Post-translationally, N- and O-Glycosylated. In terms of processing, phosphorylated. Mannose 6-phosphate residues in the carbohydrate moiety are necessary for interaction with IGF2R in activated T-cells. Mannose 6-phosphorylation is induced during T-cell activation. As to expression, expressed specifically in lymphatic vessels but not in blood vessels in the skin, small intestine, esophagus, ovary, breast and prostate glands. Not detected in lymphatic vessels in the lung, kidney, uterus, liver and stomach (at protein level). Expressed in the poorly differentiated crypt cells of the small intestine as well as in the mature villous cells. Expressed at very low levels in the colon.

It localises to the secreted. It is found in the cell membrane. Its subcellular location is the apical cell membrane. The protein localises to the cell projection. The protein resides in the invadopodium membrane. It localises to the lamellipodium membrane. It is found in the cell junction. Its subcellular location is the membrane raft. The catalysed reaction is Release of an N-terminal dipeptide, Xaa-Yaa-|-Zaa-, from a polypeptide, preferentially when Yaa is Pro, provided Zaa is neither Pro nor hydroxyproline.. With respect to regulation, inhibited by GPC3 and diprotin A. Functionally, cell surface glycoprotein receptor involved in the costimulatory signal essential for T-cell receptor (TCR)-mediated T-cell activation. Acts as a positive regulator of T-cell coactivation, by binding at least ADA, CAV1, IGF2R, and PTPRC. Its binding to CAV1 and CARD11 induces T-cell proliferation and NF-kappa-B activation in a T-cell receptor/CD3-dependent manner. Its interaction with ADA also regulates lymphocyte-epithelial cell adhesion. In association with FAP is involved in the pericellular proteolysis of the extracellular matrix (ECM), the migration and invasion of endothelial cells into the ECM. May be involved in the promotion of lymphatic endothelial cells adhesion, migration and tube formation. When overexpressed, enhanced cell proliferation, a process inhibited by GPC3. Also acts as a serine exopeptidase with a dipeptidyl peptidase activity that regulates various physiological processes by cleaving peptides in the circulation, including many chemokines, mitogenic growth factors, neuropeptides and peptide hormones such as brain natriuretic peptide 32. Removes N-terminal dipeptides sequentially from polypeptides having unsubstituted N-termini provided that the penultimate residue is proline. Its function is as follows. (Microbial infection) Acts as a receptor for human coronavirus MERS-CoV-2. This is Dipeptidyl peptidase 4 from Homo sapiens (Human).